Here is a 249-residue protein sequence, read N- to C-terminus: 4-hydroxy-tetrahydrodipicolinate reductase (249 aa).

NAD(+) is bound by residues 8 to 13 (GVTGQM), 87 to 89 (GTT), and 111 to 114 (ATNF). The active-site Proton donor/acceptor is His-143. His-144 contacts (S)-2,3,4,5-tetrahydrodipicolinate. Residue Lys-147 is the Proton donor of the active site. 153–154 (GT) contributes to the (S)-2,3,4,5-tetrahydrodipicolinate binding site.

Belongs to the DapB family.

It localises to the cytoplasm. The enzyme catalyses (S)-2,3,4,5-tetrahydrodipicolinate + NAD(+) + H2O = (2S,4S)-4-hydroxy-2,3,4,5-tetrahydrodipicolinate + NADH + H(+). The catalysed reaction is (S)-2,3,4,5-tetrahydrodipicolinate + NADP(+) + H2O = (2S,4S)-4-hydroxy-2,3,4,5-tetrahydrodipicolinate + NADPH + H(+). It functions in the pathway amino-acid biosynthesis; L-lysine biosynthesis via DAP pathway; (S)-tetrahydrodipicolinate from L-aspartate: step 4/4. Its function is as follows. Catalyzes the conversion of 4-hydroxy-tetrahydrodipicolinate (HTPA) to tetrahydrodipicolinate. In Haloarcula marismortui (strain ATCC 43049 / DSM 3752 / JCM 8966 / VKM B-1809) (Halobacterium marismortui), this protein is 4-hydroxy-tetrahydrodipicolinate reductase.